Here is a 247-residue protein sequence, read N- to C-terminus: tRNA (guanine-N(7)-)-methyltransferase (247 aa).

S-adenosyl-L-methionine is bound by residues Gly-70, 93 to 94, 128 to 129, and Leu-148; these read EI and NA. The active site involves Asp-151. Position 226-228 (226-228) interacts with S-adenosyl-L-methionine; it reads SEE.

The protein belongs to the class I-like SAM-binding methyltransferase superfamily. TrmB family.

The protein resides in the nucleus. The enzyme catalyses guanosine(46) in tRNA + S-adenosyl-L-methionine = N(7)-methylguanosine(46) in tRNA + S-adenosyl-L-homocysteine. The protein operates within tRNA modification; N(7)-methylguanine-tRNA biosynthesis. In terms of biological role, catalyzes the formation of N(7)-methylguanine at position 46 (m7G46) in tRNA. The chain is tRNA (guanine-N(7)-)-methyltransferase from Drosophila persimilis (Fruit fly).